Consider the following 516-residue polypeptide: Calcium and calcium/calmodulin-dependent serine/threonine-protein kinase (516 aa).

In terms of domain architecture, Protein kinase spans 13 to 298 (YEVVDVLGRG…ASDLLRHPWV (286 aa)). ATP-binding positions include 19–27 (LGRGGFSIV) and lysine 43. Aspartate 163 (proton acceptor) is an active-site residue. Threonine 263 carries the phosphothreonine modification. Residues 321–334 (ARRKLRAAAIASVL) form a calmodulin-binding region. The stretch at 343–363 (KRLRNLLGTHDLTSEELDNLR) forms a coiled coil. 3 EF-hand domains span residues 392–427 (SLIPLAPRVFDLFDNNRDGTVDMREILCGFSSLRNS), 428–463 (RGDDALRLCFQMYDADRSGCISKEELASMLRALPEE), and 470–505 (TEPGKLDEVFDQMDADSDGKVTFDEFKAAMNKDSAL). Ca(2+) is bound by residues aspartate 405, asparagine 407, aspartate 409, threonine 411, glutamate 416, aspartate 441, aspartate 443, serine 445, cysteine 447, glutamate 452, aspartate 483, aspartate 485, aspartate 487, lysine 489, and glutamate 494.

The protein belongs to the protein kinase superfamily. CAMK Ser/Thr protein kinase family. CaMK subfamily. Post-translationally, autophosphorylation. In terms of tissue distribution, mainly expressed in roots and panicles. Detected in leaves, shoots and culms.

It localises to the nucleus. The protein resides in the cytoplasm. It is found in the cell membrane. It carries out the reaction L-seryl-[protein] + ATP = O-phospho-L-seryl-[protein] + ADP + H(+). The catalysed reaction is L-threonyl-[protein] + ATP = O-phospho-L-threonyl-[protein] + ADP + H(+). Its function is as follows. Calcium- and calmodulin-dependent protein kinase required for arbuscular mycorrhizal (AM) symbiosis. Involved in response to water deprivation stress. Required for abscisic acid-induced antioxidant defense and oxidative stress tolerance during dehydration stress. Functions upstream of MPK1 in an abscisic acid signaling pathway that regulates the activities of antioxidant enzymes and the production of hydrogen peroxide. The chain is Calcium and calcium/calmodulin-dependent serine/threonine-protein kinase (CCAMK) from Oryza sativa subsp. japonica (Rice).